We begin with the raw amino-acid sequence, 137 residues long: MLQPKRTKFRKQMTGHNRGLAHRGSKVSFGEYALKATSRGRLTARQIESARRALTRHVKRGGKIWIRVFPDKPVTKKPLEVRMGKGKGGVEYWVAQIQPGKVLYEIEGVSEELAREAFALAAAKLPLATSFVKRTVM.

Belongs to the universal ribosomal protein uL16 family. In terms of assembly, part of the 50S ribosomal subunit.

In terms of biological role, binds 23S rRNA and is also seen to make contacts with the A and possibly P site tRNAs. The polypeptide is Large ribosomal subunit protein uL16 (Pseudomonas aeruginosa (strain LESB58)).